The primary structure comprises 259 residues: Ribonuclease HII (259 aa).

The interval 1–26 is disordered; it reads MLSTPPKLPSAHGPVHFPRRSGTGMN. The RNase H type-2 domain occupies 55 to 243; sequence APVAGADEAG…VRAQQLVLFE (189 aa). Residues aspartate 61, glutamate 62, and aspartate 152 each coordinate a divalent metal cation.

The protein belongs to the RNase HII family. The cofactor is Mn(2+). Mg(2+) is required as a cofactor.

Its subcellular location is the cytoplasm. The enzyme catalyses Endonucleolytic cleavage to 5'-phosphomonoester.. Its function is as follows. Endonuclease that specifically degrades the RNA of RNA-DNA hybrids. In Azorhizobium caulinodans (strain ATCC 43989 / DSM 5975 / JCM 20966 / LMG 6465 / NBRC 14845 / NCIMB 13405 / ORS 571), this protein is Ribonuclease HII.